The primary structure comprises 596 residues: Cis-3-hydroxy-L-proline dehydratase (596 aa).

Catalysis depends on Ser67, which acts as the Proton acceptor.

Belongs to the AcnX family. In terms of assembly, monomer. It depends on Fe(3+) as a cofactor.

It carries out the reaction cis-3-hydroxy-L-proline = 1-pyrroline-2-carboxylate + H2O. Its activity is regulated as follows. Inhibited by Zn(2+). Not inhibited by pyrrole-2-carboxylate nor its derivative 2-thiophenecarboxylate. Catalyzes the dehydration of cis-3-hydroxy-L-proline (c3LHyp) to Delta(1)-pyrroline-2-carboxylate (Pyr2C). No activity with L-proline, trans-4-hydroxy-L-proline (t4LHyp), cis-4-hydroxy-L-proline (c4LHyp), trans-3-hydroxy-L-proline (t3LHyp), D-proline, cis-4-hydroxy-D-proline (c4DHyp), trans-4-hydroxy-D-proline (t4DHyp) or L-serine as substrates. Because of the low catalytic efficiency, C3LHyp is likely not a main physiological substrate of this enzyme in H.jecorina. This is Cis-3-hydroxy-L-proline dehydratase from Hypocrea jecorina (strain QM6a) (Trichoderma reesei).